Consider the following 277-residue polypeptide: Shikimate dehydrogenase (NADP(+)) (277 aa).

Shikimate-binding positions include 18–20 and Thr65; that span reads SKS. Lys69 acts as the Proton acceptor in catalysis. Glu81 provides a ligand contact to NADP(+). Residues Asn90 and Asp106 each coordinate shikimate. NADP(+) contacts are provided by residues 130-134, 154-159, and Met217; these read GAGGA and NRTFSK. Shikimate is bound at residue Tyr219. Residue Gly241 participates in NADP(+) binding.

It belongs to the shikimate dehydrogenase family. Homodimer.

The catalysed reaction is shikimate + NADP(+) = 3-dehydroshikimate + NADPH + H(+). It functions in the pathway metabolic intermediate biosynthesis; chorismate biosynthesis; chorismate from D-erythrose 4-phosphate and phosphoenolpyruvate: step 4/7. In terms of biological role, involved in the biosynthesis of the chorismate, which leads to the biosynthesis of aromatic amino acids. Catalyzes the reversible NADPH linked reduction of 3-dehydroshikimate (DHSA) to yield shikimate (SA). The chain is Shikimate dehydrogenase (NADP(+)) from Vibrio campbellii (strain ATCC BAA-1116).